A 117-amino-acid polypeptide reads, in one-letter code: Immunoglobulin heavy variable 1-3 (117 aa).

The N-terminal stretch at 1–19 is a signal peptide; it reads MDWTWRILFLVAAATGAHS. The tract at residues 20 to 44 is framework-1; that stretch reads QVQLVQSGAEVKKPGASVKVSCKAS. An Ig-like domain is found at 20–117; sequence QVQLVQSGAE…EDTAVYYCAR (98 aa). A disulfide bridge connects residues Cys41 and Cys115. Positions 45–52 are complementarity-determining-1; the sequence is GYTFTSYA. Positions 53–69 are framework-2; the sequence is MHWVRQAPGQRLEWMGW. Residues 70–77 form a complementarity-determining-2 region; it reads INAGNGNT. Residues 78–115 form a framework-3 region; it reads KYSQKFQGRVTITRDTSASTAYMELSSLRSEDTAVYYC. Positions 116–117 are complementarity-determining-3; the sequence is AR.

As to quaternary structure, immunoglobulins are composed of two identical heavy chains and two identical light chains; disulfide-linked.

Its subcellular location is the secreted. It is found in the cell membrane. Its function is as follows. V region of the variable domain of immunoglobulin heavy chains that participates in the antigen recognition. Immunoglobulins, also known as antibodies, are membrane-bound or secreted glycoproteins produced by B lymphocytes. In the recognition phase of humoral immunity, the membrane-bound immunoglobulins serve as receptors which, upon binding of a specific antigen, trigger the clonal expansion and differentiation of B lymphocytes into immunoglobulins-secreting plasma cells. Secreted immunoglobulins mediate the effector phase of humoral immunity, which results in the elimination of bound antigens. The antigen binding site is formed by the variable domain of one heavy chain, together with that of its associated light chain. Thus, each immunoglobulin has two antigen binding sites with remarkable affinity for a particular antigen. The variable domains are assembled by a process called V-(D)-J rearrangement and can then be subjected to somatic hypermutations which, after exposure to antigen and selection, allow affinity maturation for a particular antigen. The sequence is that of Immunoglobulin heavy variable 1-3 from Homo sapiens (Human).